Reading from the N-terminus, the 452-residue chain is Probable E3 ubiquitin-protein ligase ARI15 (452 aa).

The interval Ser22–Ala256 is TRIAD supradomain. The Zn(2+) site is built by Cys26, Cys29, Cys54, His56, Cys59, Cys62, Cys83, Cys88, Cys128, Cys133, Cys154, Cys156, Cys161, Cys164, His169, Cys174, Cys208, Cys211, Cys229, Cys231, Cys236, Cys239, His246, and Cys252. The RING-type 1 zinc finger occupies Cys26–Cys88. An IBR-type zinc finger spans residues Ala106–Cys174. The RING-type 2; atypical zinc finger occupies Cys208–Cys239. The segment at Asn414–Ser445 adopts a RanBP2-type zinc-finger fold.

Belongs to the RBR family. Ariadne subfamily. It depends on Zn(2+) as a cofactor. Ubiquitous.

The catalysed reaction is [E2 ubiquitin-conjugating enzyme]-S-ubiquitinyl-L-cysteine + [acceptor protein]-L-lysine = [E2 ubiquitin-conjugating enzyme]-L-cysteine + [acceptor protein]-N(6)-ubiquitinyl-L-lysine.. Its pathway is protein modification; protein ubiquitination. In terms of biological role, might act as an E3 ubiquitin-protein ligase, or as part of E3 complex, which accepts ubiquitin from specific E2 ubiquitin-conjugating enzymes and then transfers it to substrates. This chain is Probable E3 ubiquitin-protein ligase ARI15 (ARI15), found in Arabidopsis thaliana (Mouse-ear cress).